The chain runs to 430 residues: tRNA(Ile)-lysidine synthase (430 aa).

ATP is bound at residue 27 to 32; that stretch reads SGGSDS.

This sequence belongs to the tRNA(Ile)-lysidine synthase family.

It localises to the cytoplasm. It catalyses the reaction cytidine(34) in tRNA(Ile2) + L-lysine + ATP = lysidine(34) in tRNA(Ile2) + AMP + diphosphate + H(+). In terms of biological role, ligates lysine onto the cytidine present at position 34 of the AUA codon-specific tRNA(Ile) that contains the anticodon CAU, in an ATP-dependent manner. Cytidine is converted to lysidine, thus changing the amino acid specificity of the tRNA from methionine to isoleucine. This chain is tRNA(Ile)-lysidine synthase, found in Rickettsia bellii (strain OSU 85-389).